Reading from the N-terminus, the 162-residue chain is Retinoic acid receptor responder protein 2 (162 aa).

The N-terminal stretch at 1 to 20 (MKCLLISLALWLGTVGTRGT) is a signal peptide. Cystine bridges form between Cys79/Cys89, Cys100/Cys119, and Cys103/Cys134. A propeptide spanning residues 157–162 (RALRTK) is cleaved from the precursor.

Secreted in an inactive precursor form, prochemerin, which is proteolytically processed by a variety of extracellular proteases to generate forms with differing levels of bioactivity. For example, the removal of six amino acids results in chemerin-156, which exhibits the highest activity, while removal of seven amino acids results in chemerin-155 which has slightly less activity. Some proteases are able to cleave at more than one site and chemerin forms may be sequentially processed by different enzymes to modulate activity levels. The coordinated expression and activity of chemerin-modifying enzymes is essential for regulating its bioactivation, inactivation and, consequently, biological function. Cathepsin G cleaves seven C-terminal amino acids from prochemerin (chemerin-155), elastase is able to cleave six (chemerin-156), eight (chemerin-154) or eleven (chemerin-151), plasmin cleaves five amino acids (chemerin-157), and tryptase cleaves five (chemerin-157) or eight (chemerin-154). Multiple cleavages might be required to fully activate chemerin, with an initial tryptase cleavage resulting in chemerin with low activity (chemerin-157), and a second cleavage by carboxypeptidase N or B producing highly active chemerin (chemerin-156). As to expression, expressed in the differentiated adipocytes (at protein level). Abundantly expressed in the liver, adipose tissue including visceral, epididymal, and brown adipose tissue.

It is found in the secreted. Functionally, adipocyte-secreted protein (adipokine) that regulates adipogenesis, metabolism and inflammation through activation of the chemokine-like receptor 1 (CMKLR1). Also acts as a ligand for CMKLR2. Can also bind to C-C chemokine receptor-like 2 (CCRL2), but with a lower affinity than it does to CMKLR1 or CMKLR2. Positively regulates adipocyte differentiation, modulates the expression of adipocyte genes involved in lipid and glucose metabolism and might play a role in angiogenesis, a process essential for the expansion of white adipose tissue. Also acts as a pro-inflammatory adipokine, causing an increase in secretion of pro-inflammatory and prodiabetic adipokines, which further impair adipose tissue metabolic function and have negative systemic effects including impaired insulin sensitivity, altered glucose and lipid metabolism, and a decrease in vascular function in other tissues. Can have both pro- and anti-inflammatory properties depending on the modality of enzymatic cleavage by different classes of proteases. Acts as a chemotactic factor for leukocyte populations expressing CMKLR1, particularly immature plasmacytoid dendritic cells, but also immature myeloid DCs, macrophages and natural killer cells. Exerts an anti-inflammatory role by preventing TNF/TNFA-induced VCAM1 expression and monocytes adhesion in vascular endothelial cells. The effect is mediated via inhibiting activation of NF-kappa-B and CRK/p38 through stimulation of AKT1/NOS3 signaling and nitric oxide production. Exhibits an antimicrobial function in the skin. In Mus musculus (Mouse), this protein is Retinoic acid receptor responder protein 2 (Rarres2).